Consider the following 400-residue polypeptide: Subtilisin-like protease 11 (400 aa).

Positions 1–19 (MGLFTVVFTAIAALSAVDA) are cleaved as a signal peptide. Residues 20-117 (AELLRSPNSK…VEHDRYVYID (98 aa)) constitute a propeptide that is removed on maturation. The 82-residue stretch at 35–116 (SYLVVMKDSV…FVEHDRYVYI (82 aa)) folds into the Inhibitor I9 domain. Residues 127–400 (SWGLGRVSHR…NKLLYNGSGQ (274 aa)) enclose the Peptidase S8 domain. The N-linked (GlcNAc...) asparagine glycan is linked to Asn-138. Active-site charge relay system residues include Asp-159 and His-191. Residues Asn-252, Asn-336, and Asn-337 are each glycosylated (N-linked (GlcNAc...) asparagine). The Charge relay system role is filled by Ser-346. Residues Asn-388 and Asn-396 are each glycosylated (N-linked (GlcNAc...) asparagine).

This sequence belongs to the peptidase S8 family.

The protein localises to the secreted. Functionally, secreted subtilisin-like serine protease with keratinolytic activity that contributes to pathogenicity. The protein is Subtilisin-like protease 11 (SUB11) of Arthroderma gypseum (strain ATCC MYA-4604 / CBS 118893) (Microsporum gypseum).